A 370-amino-acid polypeptide reads, in one-letter code: L-selectin (370 aa).

The signal sequence occupies residues 1–28 (MLCPWKCQNAQRGLWNVFKLWVWIMLCC). Residues 29-38 (DFFAHHGTDC) constitute a propeptide that is removed on maturation. Residues 39–333 (WTYHYSKRPM…SINEESDYNP (295 aa)) are Extracellular-facing. The region spanning 55–155 (AFCRENYTDL…ACHKAKTALC (101 aa)) is the C-type lectin domain. 10 cysteine pairs are disulfide-bonded: C57/C155, C128/C147, C128/C160, C160/C171, C165/C180, C182/C191, C197/C241, C227/C254, C259/C303, and C289/C316. 3 N-linked (GlcNAc...) asparagine glycosylation sites follow: N60, N77, and N104. E118, N120, E126, N143, and D144 together coordinate Ca(2+). In terms of domain architecture, EGF-like spans 156–192 (YTASCKPWSCSGHGQCVEVINNYTCNCDLGYYGPECQ). N177 carries an N-linked (GlcNAc...) asparagine glycan. Sushi domains lie at 195–256 (TQCV…TCRV) and 257–318 (IQCE…RCQK). Residues N216, N226, and N246 are each glycosylated (N-linked (GlcNAc...) asparagine). N-linked (GlcNAc...) asparagine glycans are attached at residues N308 and N320. Residues 334-354 (LFIPVAVMVTAFSGLAFIIWL) form a helical membrane-spanning segment. The Cytoplasmic portion of the chain corresponds to 355–370 (ARRLKRKSKKVSEKHG).

Belongs to the selectin/LECAM family. Interaction with SELPLG/PSGL1 and PODXL2 is required for promoting recruitment and rolling of leukocytes. This interaction is dependent on the sialyl Lewis X glycan modification of SELPLG and PODXL2, and tyrosine sulfation modifications of SELPLG. Sulfation on 'Tyr-51' of SELPLG is important for L-selectin binding. Post-translationally, N-glycosylated. In terms of tissue distribution, highly expressed in lymphocytes from peripheral lymph nodes. Low in lymphocytes isolated from Peyer patches.

It is found in the cell membrane. Functionally, calcium-dependent lectin that mediates cell adhesion by binding to glycoproteins on neighboring cells. Mediates the adherence of lymphocytes to endothelial cells of high endothelial venules in peripheral lymph nodes. Promotes initial tethering and rolling of leukocytes in endothelia. The chain is L-selectin (SELL) from Bos taurus (Bovine).